Reading from the N-terminus, the 459-residue chain is ATP synthase subunit beta (459 aa).

148–155 (GGAGVGKT) serves as a coordination point for ATP.

It belongs to the ATPase alpha/beta chains family. F-type ATPases have 2 components, CF(1) - the catalytic core - and CF(0) - the membrane proton channel. CF(1) has five subunits: alpha(3), beta(3), gamma(1), delta(1), epsilon(1). CF(0) has three main subunits: a(1), b(2) and c(9-12). The alpha and beta chains form an alternating ring which encloses part of the gamma chain. CF(1) is attached to CF(0) by a central stalk formed by the gamma and epsilon chains, while a peripheral stalk is formed by the delta and b chains.

Its subcellular location is the cell inner membrane. The catalysed reaction is ATP + H2O + 4 H(+)(in) = ADP + phosphate + 5 H(+)(out). Its function is as follows. Produces ATP from ADP in the presence of a proton gradient across the membrane. The catalytic sites are hosted primarily by the beta subunits. The polypeptide is ATP synthase subunit beta (Thioalkalivibrio sulfidiphilus (strain HL-EbGR7)).